A 342-amino-acid polypeptide reads, in one-letter code: N-acetyl-gamma-glutamyl-phosphate reductase (342 aa).

C147 is an active-site residue.

This sequence belongs to the NAGSA dehydrogenase family. Type 1 subfamily.

It localises to the cytoplasm. The catalysed reaction is N-acetyl-L-glutamate 5-semialdehyde + phosphate + NADP(+) = N-acetyl-L-glutamyl 5-phosphate + NADPH + H(+). The protein operates within amino-acid biosynthesis; L-arginine biosynthesis; N(2)-acetyl-L-ornithine from L-glutamate: step 3/4. Catalyzes the NADPH-dependent reduction of N-acetyl-5-glutamyl phosphate to yield N-acetyl-L-glutamate 5-semialdehyde. The protein is N-acetyl-gamma-glutamyl-phosphate reductase of Campylobacter jejuni subsp. doylei (strain ATCC BAA-1458 / RM4099 / 269.97).